A 103-amino-acid chain; its full sequence is Transcriptional regulator WhiB7 (103 aa).

Residues Cys17, Cys49, Cys52, and Cys58 each contribute to the [4Fe-4S] cluster site. Residues Pro25–Ile82 form the 4Fe-4S Wbl-type domain. Residues Ile82–Ala103 form a disordered region.

This sequence belongs to the WhiB family. [4Fe-4S] cluster serves as cofactor. The Fe-S cluster can be nitrosylated by nitric oxide (NO). Post-translationally, upon Fe-S cluster removal intramolecular disulfide bonds are formed.

The protein resides in the cytoplasm. In terms of biological role, acts as a transcriptional regulator. Probably redox-responsive. The apo- but not holo-form probably binds DNA. Participates in maintaining a reduced cytoplasmic (MSH/MSSM) environment under normal growth conditions and directly or indirectly controls the concentration of mycothiol (MSH + MSSM). This Mycolicibacterium smegmatis (strain ATCC 700084 / mc(2)155) (Mycobacterium smegmatis) protein is Transcriptional regulator WhiB7 (whiB7).